The chain runs to 358 residues: Ribosomal RNA large subunit methyltransferase M (358 aa).

S-adenosyl-L-methionine-binding positions include Ser187, 220 to 223 (CPGG), Asp239, Asp259, and Asp276. Lys305 functions as the Proton acceptor in the catalytic mechanism.

The protein belongs to the class I-like SAM-binding methyltransferase superfamily. RNA methyltransferase RlmE family. RlmM subfamily. In terms of assembly, monomer.

The protein localises to the cytoplasm. It carries out the reaction cytidine(2498) in 23S rRNA + S-adenosyl-L-methionine = 2'-O-methylcytidine(2498) in 23S rRNA + S-adenosyl-L-homocysteine + H(+). Functionally, catalyzes the 2'-O-methylation at nucleotide C2498 in 23S rRNA. This chain is Ribosomal RNA large subunit methyltransferase M, found in Shewanella woodyi (strain ATCC 51908 / MS32).